The sequence spans 525 residues: Ribonuclease III domain-containing protein RNC1, chloroplastic (525 aa).

Residues 1–28 (MGPPAMAFQALTLTPLPFSLHSSSRRVR) constitute a chloroplast transit peptide. 2 RNase III domains span residues 125 to 271 (LLEA…LCFG) and 403 to 503 (EHPR…CVYG).

Interacts with RNA. Part of large ribonucleo-protein particles that contain CAF1 and/or CAF2.

Its subcellular location is the plastid. It localises to the chloroplast stroma. Binds specific group II introns in chloroplasts and facilitates their splicing. Acts on both subgroup IIA and subgroup IIB introns. The substrates of the subgroup II also require the CRM domain proteins CAF1 or CAF2. Binds both single-stranded and double-stranded RNA non-specifically, but lacks endonuclease activity. Required for plastid ribosome biogenesis. This chain is Ribonuclease III domain-containing protein RNC1, chloroplastic, found in Zea mays (Maize).